The following is a 926-amino-acid chain: MHVKAETVLALLTPAPPSVVGQHVVDLSGDGWTLSSTALNRTVPGHLPSQVHLDLFEAGVIDIMASMILTFVGLRMPIGRIPATRLKAYFESTWLVFDGLDTFATITFCDQHVGSTDNQFRQHHFDVSQILKECKQDPVLRINFGSAPNIANTIAKSPDAEEWPPGVQITNEYPNRWYIRKEQSDFGWDWGPAFAPVGPWKPSYIVQNSHAELYVLNTDIDIYRQGQINYLPPDQSQPWIVNASIDFLGPVPCKPSMSIEIKDAATGSVLSSGLLQNVTVSGKSITGTTTIDGDAPKLWWPSGMGKQNLYNVTITVQNDMKKSLAKVTKRTGFRTIFLNQRNITDDQLAQGIAPGANWHFEINGYEFYAKGSNIIPPDAFWPRVTQARMARLFDAVTAGNQNMLRVWASGAYLHDFIYDLADEKGILLWSEFQFSDALYPVNDAFLENVAAEVVYNVRRVNHHPSLALWAGGNEIESLMLPMARRADPTGYSKYIGEYEKLYISLILPLVYENTRSITYSPSSTTEGYLYVNLSAPVPMAERYSNTTPGSYYGDTDYYNYDTSVSFDYNHYPVGRFANEFGFHSMPSLQTWQQAVDPEDLQFNSSVVVLRNHHYTAGGLFTDNFKNSSKGMGEMTMGVEAYYPIPSKSDSVANFSAWCHATQLFQADLYKSQIQFYRRGSGMPERQLGSLYWQLEDIWQAPTWAGIEYDGRWKVLHYVARDIYQPIIVSPFWNYTTGRLEVYVTSDLWEPAQGTVNLTWVDLSGKSIANNAGTPETVSFTVGALNTTNIYTTNISELSLPDLKDSILILSLSGEGRLPNASSKKAFVHQNHFTPVFPKDLSLKDPKLEVSYSPESRKFTVQATGGVSLYTWLDYPAGAVGYFEANAFVLLPGVPKEVSFVAQEGNVTDDWLQRVTVQSLWDQKVRD.

An N-terminal signal peptide occupies residues 1 to 21 (MHVKAETVLALLTPAPPSVVG). N-linked (GlcNAc...) asparagine glycans are attached at residues Asn-40, Asn-242, Asn-277, Asn-311, and Asn-342. The active-site Proton donor is the Glu-474. N-linked (GlcNAc...) asparagine glycans are attached at residues Asn-532, Asn-603, Asn-626, Asn-653, Asn-733, Asn-756, Asn-785, Asn-793, Asn-819, and Asn-905.

Belongs to the glycosyl hydrolase 2 family. Beta-mannosidase A subfamily. As to quaternary structure, homodimer.

It is found in the secreted. It catalyses the reaction Hydrolysis of terminal, non-reducing beta-D-mannose residues in beta-D-mannosides.. Its pathway is glycan metabolism; N-glycan degradation. Functionally, exoglycosidase that cleaves the single beta-linked mannose residue from the non-reducing end of beta-mannosidic oligosaccharides of various complexity and length. Involved in the degradation of polymeric mannan and galactomannan. This chain is Beta-mannosidase A (mndA), found in Aspergillus fumigatus (strain CBS 144.89 / FGSC A1163 / CEA10) (Neosartorya fumigata).